An 863-amino-acid chain; its full sequence is Bifunctional uridylyltransferase/uridylyl-removing enzyme (863 aa).

The interval Met1–Gln328 is uridylyltransferase. The uridylyl-removing stretch occupies residues Leu329–Thr687. The 123-residue stretch at Val446 to Leu568 folds into the HD domain. 2 consecutive ACT domains span residues Glu688–Ala764 and Glu794–Arg863.

Belongs to the GlnD family. Requires Mg(2+) as cofactor.

It carries out the reaction [protein-PII]-L-tyrosine + UTP = [protein-PII]-uridylyl-L-tyrosine + diphosphate. It catalyses the reaction [protein-PII]-uridylyl-L-tyrosine + H2O = [protein-PII]-L-tyrosine + UMP + H(+). With respect to regulation, uridylyltransferase (UTase) activity is inhibited by glutamine, while glutamine activates uridylyl-removing (UR) activity. Its function is as follows. Modifies, by uridylylation and deuridylylation, the PII regulatory proteins (GlnB and homologs), in response to the nitrogen status of the cell that GlnD senses through the glutamine level. Under low glutamine levels, catalyzes the conversion of the PII proteins and UTP to PII-UMP and PPi, while under higher glutamine levels, GlnD hydrolyzes PII-UMP to PII and UMP (deuridylylation). Thus, controls uridylylation state and activity of the PII proteins, and plays an important role in the regulation of nitrogen assimilation and metabolism. This is Bifunctional uridylyltransferase/uridylyl-removing enzyme from Haemophilus influenzae (strain ATCC 51907 / DSM 11121 / KW20 / Rd).